Reading from the N-terminus, the 72-residue chain is Cytochrome c oxidase subunit 2 (72 aa).

Residues 1–14 lie on the Mitochondrial intermembrane side of the membrane; it reads MAHPSQLGFQDAAS. The helical transmembrane segment at 15-45 threads the bilayer; it reads PVMEELLHFHDHALMIVFLISTLVLYIIVAM. Residues 46-72 are Mitochondrial matrix-facing; that stretch reads VSTKLTNKYXLDSQEIEVIWTXLPAVI.

It belongs to the cytochrome c oxidase subunit 2 family. In terms of assembly, component of the cytochrome c oxidase (complex IV, CIV), a multisubunit enzyme composed of 14 subunits. The complex is composed of a catalytic core of 3 subunits MT-CO1, MT-CO2 and MT-CO3, encoded in the mitochondrial DNA, and 11 supernumerary subunits COX4I, COX5A, COX5B, COX6A, COX6B, COX6C, COX7A, COX7B, COX7C, COX8 and NDUFA4, which are encoded in the nuclear genome. The complex exists as a monomer or a dimer and forms supercomplexes (SCs) in the inner mitochondrial membrane with NADH-ubiquinone oxidoreductase (complex I, CI) and ubiquinol-cytochrome c oxidoreductase (cytochrome b-c1 complex, complex III, CIII), resulting in different assemblies (supercomplex SCI(1)III(2)IV(1) and megacomplex MCI(2)III(2)IV(2)). Found in a complex with TMEM177, COA6, COX18, COX20, SCO1 and SCO2. Interacts with TMEM177 in a COX20-dependent manner. Interacts with COX20. Interacts with COX16. Cu cation serves as cofactor.

It localises to the mitochondrion inner membrane. The catalysed reaction is 4 Fe(II)-[cytochrome c] + O2 + 8 H(+)(in) = 4 Fe(III)-[cytochrome c] + 2 H2O + 4 H(+)(out). Its function is as follows. Component of the cytochrome c oxidase, the last enzyme in the mitochondrial electron transport chain which drives oxidative phosphorylation. The respiratory chain contains 3 multisubunit complexes succinate dehydrogenase (complex II, CII), ubiquinol-cytochrome c oxidoreductase (cytochrome b-c1 complex, complex III, CIII) and cytochrome c oxidase (complex IV, CIV), that cooperate to transfer electrons derived from NADH and succinate to molecular oxygen, creating an electrochemical gradient over the inner membrane that drives transmembrane transport and the ATP synthase. Cytochrome c oxidase is the component of the respiratory chain that catalyzes the reduction of oxygen to water. Electrons originating from reduced cytochrome c in the intermembrane space (IMS) are transferred via the dinuclear copper A center (CU(A)) of subunit 2 and heme A of subunit 1 to the active site in subunit 1, a binuclear center (BNC) formed by heme A3 and copper B (CU(B)). The BNC reduces molecular oxygen to 2 water molecules using 4 electrons from cytochrome c in the IMS and 4 protons from the mitochondrial matrix. The sequence is that of Cytochrome c oxidase subunit 2 (mt-co2) from Gomphosus varius (Bird wrasse).